We begin with the raw amino-acid sequence, 301 residues long: Probable alpha-L-glutamate ligase 1 (301 aa).

The 184-residue stretch at 104-287 (LQLLSRKGIG…VTEPIVEYIE (184 aa)) folds into the ATP-grasp domain. ATP contacts are provided by residues Lys141, 178 to 179 (EY), Asp187, and 211 to 213 (RSN). Mg(2+) contacts are provided by Asp248, Glu260, and Asn262. Mn(2+) is bound by residues Asp248, Glu260, and Asn262.

It belongs to the RimK family. Mg(2+) serves as cofactor. Mn(2+) is required as a cofactor.

In Shewanella sp. (strain ANA-3), this protein is Probable alpha-L-glutamate ligase 1.